Here is a 455-residue protein sequence, read N- to C-terminus: Beta-cyclopiazonate dehydrogenase (455 aa).

The signal sequence occupies residues 1–20 (MATRIASFIGISTVASLALA).

Belongs to the beta-cyclopiazonate dehydrogenase family. It depends on FAD as a cofactor.

The catalysed reaction is beta-cyclopiazonate + A = alpha-cyclopiazonate + AH2. In terms of biological role, beta-cyclopiazonate dehydrogenase involved in the synthesis of the fungal neurotoxin alpha-cyclopiazonic acid (CPA). CpaO carries out the dehydrogenation of beta-CPA to yield an unstable enimine product, which is captured by intramolecular cyclization to create the pentacyclic fused scaffold of alpha-cyclopiazonate. This Aspergillus flavus (strain ATCC 200026 / FGSC A1120 / IAM 13836 / NRRL 3357 / JCM 12722 / SRRC 167) protein is Beta-cyclopiazonate dehydrogenase.